The sequence spans 59 residues: MTSVSTQLSLVLMSLLLVLPVVEAVEAGDAIALLLGVVLSITGICACLGVYARKRNGQM.

The N-terminal stretch at 1–24 (MTSVSTQLSLVLMSLLLVLPVVEA) is a signal peptide. Topologically, residues 25-29 (VEAGD) are extracellular. Residues 30–50 (AIALLLGVVLSITGICACLGV) form a helical membrane-spanning segment. Over 51-59 (YARKRNGQM) the chain is Cytoplasmic.

In terms of assembly, interacts (via transmembrane domain) with antiviral protein MAVS (via transmembrane domain); the interaction disrupts MAVS interaction with RIGI and inhibits MAVS aggregation, resulting in the repression of type I interferon signaling and innate immune responses.

The protein resides in the endoplasmic reticulum membrane. The protein localises to the mitochondrion membrane. Negatively regulates antiviral innate immune responses. Disrupts the interaction of antiviral protein MAVS with innate immune receptor RIGI and inhibits MAVS aggregation, resulting in the repression of type I interferon signaling and innate immune responses. In Homo sapiens (Human), this protein is Small integral membrane protein 30.